A 179-amino-acid chain; its full sequence is MARLKDYYQKKLVAKLKTELGLDNIMEVPAIKKITLNMGVGDAAKDKKIMTFALNDLTAIAGQKPVVTKSKKSIAGFKIRDGWPIGAKVTLRGDRMYEFLDRLITIAIPRIRDFRGLSAKSFDGRGNYSLGMREQISFPEIDYDKVDSIRGLDISITTTAKNDDQGRALLKAFGFPFKS.

It belongs to the universal ribosomal protein uL5 family. In terms of assembly, part of the 50S ribosomal subunit; part of the 5S rRNA/L5/L18/L25 subcomplex. Contacts the 5S rRNA and the P site tRNA. Forms a bridge to the 30S subunit in the 70S ribosome.

In terms of biological role, this is one of the proteins that bind and probably mediate the attachment of the 5S RNA into the large ribosomal subunit, where it forms part of the central protuberance. In the 70S ribosome it contacts protein S13 of the 30S subunit (bridge B1b), connecting the 2 subunits; this bridge is implicated in subunit movement. Contacts the P site tRNA; the 5S rRNA and some of its associated proteins might help stabilize positioning of ribosome-bound tRNAs. The polypeptide is Large ribosomal subunit protein uL5 (Francisella tularensis subsp. mediasiatica (strain FSC147)).